Reading from the N-terminus, the 610-residue chain is UvrABC system protein C (610 aa).

A GIY-YIG domain is found at 16–94 (SAPGVYRMYD…IKQYMPKYNV (79 aa)). The UVR domain maps to 203–238 (KQVISQLVAKMETAAIDMEYERAAQYRDQITALRRV).

This sequence belongs to the UvrC family. As to quaternary structure, interacts with UvrB in an incision complex.

The protein resides in the cytoplasm. The UvrABC repair system catalyzes the recognition and processing of DNA lesions. UvrC both incises the 5' and 3' sides of the lesion. The N-terminal half is responsible for the 3' incision and the C-terminal half is responsible for the 5' incision. This chain is UvrABC system protein C, found in Shewanella frigidimarina (strain NCIMB 400).